We begin with the raw amino-acid sequence, 84 residues long: Dolichol phosphate-mannose biosynthesis regulatory protein (84 aa).

Transmembrane regions (helical) follow at residues 11-31 and 49-69; these read FGLV…VILL and YAVL…GLFI.

This sequence belongs to the DPM2 family. As to quaternary structure, component of the dolichol-phosphate mannose (DPM) synthase complex composed of DPM1, DPM2 and DPM3; in the complex interacts directly with DPM3. Component of the glycosylphosphatidylinositol-N-acetylglucosaminyltransferase (GPI-GnT) complex composed at least by PIGA, PIGC, PIGH, PIGP, PIGQ, PIGY and DPM2. Interacts with PIGA, PIGC and PIGQ.

It localises to the endoplasmic reticulum membrane. It participates in protein modification; protein glycosylation. Functionally, regulates the biosynthesis of dolichol phosphate-mannose. Regulatory subunit of the dolichol-phosphate mannose (DPM) synthase complex; essential for the ER localization and stable expression of DPM1. Part of the glycosylphosphatidylinositol-N-acetylglucosaminyltransferase (GPI-GnT) complex that catalyzes the transfer of N-acetylglucosamine from UDP-N-acetylglucosamine to phosphatidylinositol and participates in the first step of GPI biosynthesis. May act by regulating the GPI-GNT complex. This is Dolichol phosphate-mannose biosynthesis regulatory protein from Rattus norvegicus (Rat).